The chain runs to 376 residues: Homeobox protein extradenticle (376 aa).

The tract at residues 1-37 is disordered; sequence MEDPNRMLAHTGGMMAPQGYGLSGQDDGQNAGSENEV. The PBC domain maps to 38–237; it reads RKQKDIGEIL…VMILRSRFLD (200 aa). A PBC-A region spans residues 45–124; it reads EILQQIMSIS…EGVAGPEKGG (80 aa). A PBC-B region spans residues 127–237; sequence AAAASAAAAS…VMILRSRFLD (111 aa). The homeobox; TALE-type DNA-binding region spans 238–300; it reads ARRKRRNFSK…NKRIRYKKNI (63 aa). The segment covering 318–335 has biased composition (low complexity); the sequence is ASPYSMAGPPSGTTTPMM. Residues 318-376 are disordered; that stretch reads ASPYSMAGPPSGTTTPMMSPAPPQDSMGYPMGSGGYDQQQPYDNSMGGYDPNLHQDLSP.

The protein belongs to the TALE/PBX homeobox family. Interacts with Ubx and hth. In terms of tissue distribution, prior to full germband retraction it is ubiquitously present, after germband retraction, mostly present in the anterior portion of the ventral nerve cord.

It localises to the nucleus. In terms of biological role, transcription factor which acts with the selector homeodomain proteins altering the regulation of downstream target genes such as wingless (wg), teashirt (tsh) and decapentaplegic (dpp), thus affecting segmental identity. Delimits the eye field and prevent inappropriate eye development. Required for proper localization of chordotonal organs within the peripheral nervous system. This is Homeobox protein extradenticle (exd) from Drosophila melanogaster (Fruit fly).